The chain runs to 273 residues: Ribosomal RNA small subunit methyltransferase A (273 aa).

Positions 18, 20, 45, 66, 91, and 113 each coordinate S-adenosyl-L-methionine.

This sequence belongs to the class I-like SAM-binding methyltransferase superfamily. rRNA adenine N(6)-methyltransferase family. RsmA subfamily.

It localises to the cytoplasm. The enzyme catalyses adenosine(1518)/adenosine(1519) in 16S rRNA + 4 S-adenosyl-L-methionine = N(6)-dimethyladenosine(1518)/N(6)-dimethyladenosine(1519) in 16S rRNA + 4 S-adenosyl-L-homocysteine + 4 H(+). Specifically dimethylates two adjacent adenosines (A1518 and A1519) in the loop of a conserved hairpin near the 3'-end of 16S rRNA in the 30S particle. May play a critical role in biogenesis of 30S subunits. The protein is Ribosomal RNA small subunit methyltransferase A of Shigella boydii serotype 18 (strain CDC 3083-94 / BS512).